A 410-amino-acid chain; its full sequence is Chitin deacetylase 3 (410 aa).

Residues 1–18 (MYGHLSLSTLSLLAVVAA) form the signal peptide. The propeptide occupies 19–39 (APFPESWLQPRDSDVSQLFRR). Residues Asn-61 and Asn-80 are each glycosylated (N-linked (GlcNAc...) asparagine). The NodB homology domain occupies 124 to 314 (KVWALSFDDG…KAVANGWSVK (191 aa)). Catalysis depends on Asp-131, which acts as the Proton acceptor. Asp-131 contacts acetate. Asp-132 is a binding site for Co(2+). An N-linked (GlcNAc...) asparagine glycan is attached at Asn-149. Residues His-183 and His-187 each coordinate Co(2+). Tyr-225 lines the acetate pocket. Residue Asn-279 is glycosylated (N-linked (GlcNAc...) asparagine). His-289 (proton donor) is an active-site residue. Asn-293 carries N-linked (GlcNAc...) asparagine glycosylation. The GPI-anchor amidated serine moiety is linked to residue Ser-385. A propeptide spans 386 to 410 (SSWPIANRPSLFVIACGLALAAIMV) (removed in mature form).

This sequence belongs to the polysaccharide deacetylase family. Co(2+) is required as a cofactor.

The protein localises to the cell membrane. It catalyses the reaction [(1-&gt;4)-N-acetyl-beta-D-glucosaminyl](n) + n H2O = chitosan + n acetate. Hydrolyzes the N-acetamido groups of N-acetyl-D-glucosamine residues in chitin to form chitosan and acetate. Chitosan is required to anchor melanin to the cell wall, for maintenance of cell wall integrity, and for proper cytokinesis. Chitosan offers an advantage during infection as it is less readily detected than chitin by host immunosurveillance mechanisms. In Cryptococcus neoformans var. neoformans serotype D (strain JEC21 / ATCC MYA-565) (Filobasidiella neoformans), this protein is Chitin deacetylase 3.